The primary structure comprises 178 residues: HTH-type transcriptional regulator SutR (178 aa).

One can recognise an HTH cro/C1-type domain in the interval 12 to 66 (LKQLRQQRGWSLSRLAEATGVSKAMLGQIERNESSPTVATLWKIATGLNVPFSTF). A DNA-binding region (H-T-H motif) is located at residues 23-42 (LSRLAEATGVSKAMLGQIER). Residues 105 to 171 (QMASGAISES…GGEQTVHFHS (67 aa)) enclose the Cupin type-2 domain.

In terms of biological role, regulates the expression of 12-16 transcription units involved in various steps of sulfur utilization. Represses expression of pfkB, fliZ, cysE, ydcO and its own expression. Activates expression of ypfN. Acts by binding to SutR boxes. This is HTH-type transcriptional regulator SutR from Escherichia coli (strain K12).